Here is a 111-residue protein sequence, read N- to C-terminus: Prophage-derived-like uncharacterized protein YozM (111 aa).

A signal peptide spans 1–24; the sequence is MKKRLIGFLVLVPALIMWGITLIE.

In Bacillus subtilis (strain 168), this protein is Prophage-derived-like uncharacterized protein YozM (yozM).